We begin with the raw amino-acid sequence, 86 residues long: Cell division topological specificity factor (86 aa).

The protein belongs to the MinE family.

In terms of biological role, prevents the cell division inhibition by proteins MinC and MinD at internal division sites while permitting inhibition at polar sites. This ensures cell division at the proper site by restricting the formation of a division septum at the midpoint of the long axis of the cell. The protein is Cell division topological specificity factor of Shewanella sediminis (strain HAW-EB3).